The sequence spans 594 residues: MKVIEKIQEAAADGRTVFSFEYFPPKTEEGLDNLFERMDRMVAHGPNFCDITWGAGGSTADLTLEIANRMQNMVCVETMMHLTCTNMPVEKIDDALTTIKSNGIQNVLALRGDPPHGQDKFVQVAGGFACALDLVQHIRAKYGDYFGITVAGYPEAHPDAIQSTEGATPEAYSNDLAYLKQKVDAGADLIITQLFYDTDIFLKFVNDCRQIGITCPIVPGIMPINNYKGFLRMTGFCKTKIPAEITAALEPIKDNEEAVKAYGIHLGTEMCKKILATGIKTLHLYTLNMEKSALGILMNLGLIEESKISRSLPWRPPTNVFRVKEDVRPIFWANRPKSYISRTLGWDQYPHGRWGDSRNPSYGALTDYQFTRPRGRGKKLQEEWAVPVKSVEDINERFMNFCQGKLTSSPWSELDGLQPETKIIDDQLVKINQKGFLTINSQPAVNGERSDSTSVGWGGPGGYVYQKAYLEFFCSKEKLDQLIEKSKAFPSLTYIAVNKDGESFSNIPTNAVNAVTWGVFPGKEIVQPTVVDSASFMVWKDEAFEIWSKGWACLFPEGDSSREILDKVQKSYFLVSLVDNDYINGDLFAAFKEI.

Glutamate 21 acts as the Proton donor/acceptor in catalysis. NAD(+)-binding positions include glutamate 21–lysine 26 and threonine 52–tryptophan 53. FAD-binding positions include threonine 52–tryptophan 53, histidine 81, arginine 111–aspartate 113, tyrosine 153, histidine 157–alanine 160, aspartate 175, and lysine 182. Aspartate 113 is a binding site for substrate. 2 residues coordinate substrate: glutamine 193 and tyrosine 285.

It belongs to the methylenetetrahydrofolate reductase family. In terms of assembly, homodimer. FAD serves as cofactor.

It catalyses the reaction (6S)-5-methyl-5,6,7,8-tetrahydrofolate + NAD(+) = (6R)-5,10-methylene-5,6,7,8-tetrahydrofolate + NADH + H(+). It functions in the pathway one-carbon metabolism; tetrahydrofolate interconversion. Plant MTHFRs strongly prefer NADH over NADPH. Not inhibited by methionine or S-adenosylmethionine. Its function is as follows. The probable reversibility of the MTHFR reaction in plants suggests that they can metabolize the methyl group of 5,10-methylenetetrahydrofolate to serine, sugars and starch. In Oryza sativa subsp. japonica (Rice), this protein is Probable methylenetetrahydrofolate reductase (NADH).